The chain runs to 244 residues: MEMAAPVSPAPRTVEDIFKDFSGRRAGLVRALTVDVDEFYGFCDPEKENLCLYGHPNGRWEVALPAEEVPPELPEPALGINFARDGMHRRDWLSLVAVHSDSWLLSVAFFFGARLNGNERKRLFSLINDHPTVLEALSDRKHGRDNKSGADNGSKSRHSGKRANDVQTKTSRPAVVDDGYDEEEHSETLCGTCGGRYNANEFWIGCDICERWFHGKCVRITPAKAEHIKHYKCPDCSSSKKSRQ.

Residues Leu-137–Ser-148 show a composition bias toward basic and acidic residues. A disordered region spans residues Leu-137–Asp-178. Residues Glu-187–Ser-239 form a PHD-type zinc finger.

Belongs to the Alfin family. In terms of assembly, interacts with H3K4me3 and to a lesser extent with H3K4me2.

Its subcellular location is the nucleus. In terms of biological role, histone-binding component that specifically recognizes H3 tails trimethylated on 'Lys-4' (H3K4me3), which mark transcription start sites of virtually all active genes. In Oryza sativa subsp. indica (Rice), this protein is PHD finger protein ALFIN-LIKE 2.